Consider the following 600-residue polypeptide: UvrABC system protein C (600 aa).

A GIY-YIG domain is found at 15–100 (NSTGVYQYFN…IKQLHPKYNI (86 aa)). One can recognise a UVR domain in the interval 203 to 238 (SVLLKNLEKQMLVLAQNENYEEAAKVRDQIAMIKDL).

Belongs to the UvrC family. In terms of assembly, interacts with UvrB in an incision complex.

It localises to the cytoplasm. In terms of biological role, the UvrABC repair system catalyzes the recognition and processing of DNA lesions. UvrC both incises the 5' and 3' sides of the lesion. The N-terminal half is responsible for the 3' incision and the C-terminal half is responsible for the 5' incision. The polypeptide is UvrABC system protein C (Campylobacter jejuni subsp. jejuni serotype O:2 (strain ATCC 700819 / NCTC 11168)).